A 468-amino-acid chain; its full sequence is ATP synthase subunit beta (468 aa).

148 to 155 (GGAGVGKT) is a binding site for ATP.

This sequence belongs to the ATPase alpha/beta chains family. F-type ATPases have 2 components, CF(1) - the catalytic core - and CF(0) - the membrane proton channel. CF(1) has five subunits: alpha(3), beta(3), gamma(1), delta(1), epsilon(1). CF(0) has three main subunits: a(1), b(2) and c(9-12). The alpha and beta chains form an alternating ring which encloses part of the gamma chain. CF(1) is attached to CF(0) by a central stalk formed by the gamma and epsilon chains, while a peripheral stalk is formed by the delta and b chains.

Its subcellular location is the cell inner membrane. It catalyses the reaction ATP + H2O + 4 H(+)(in) = ADP + phosphate + 5 H(+)(out). Functionally, produces ATP from ADP in the presence of a proton gradient across the membrane. The catalytic sites are hosted primarily by the beta subunits. The sequence is that of ATP synthase subunit beta from Xanthomonas axonopodis pv. citri (strain 306).